Reading from the N-terminus, the 965-residue chain is UvrABC system protein A (965 aa).

ATP is bound at residue 32 to 39; that stretch reads GLSGSGKS. Residues 254–281 form a C4-type zinc finger; it reads CPVCDYSLPELEPRLFSFNAPMGACPAC. 2 consecutive ABC transporter domains span residues 311–588 and 608–937; these read WDRR…PRSL and PNAT…HFLA. Position 641 to 648 (641 to 648) interacts with ATP; it reads GVSGSGKS. A C4-type zinc finger spans residues 740-766; it reads CEACEGDGLIKVEMHFLPDVYVPCDVC.

Belongs to the ABC transporter superfamily. UvrA family. In terms of assembly, forms a heterotetramer with UvrB during the search for lesions.

The protein resides in the cytoplasm. In terms of biological role, the UvrABC repair system catalyzes the recognition and processing of DNA lesions. UvrA is an ATPase and a DNA-binding protein. A damage recognition complex composed of 2 UvrA and 2 UvrB subunits scans DNA for abnormalities. When the presence of a lesion has been verified by UvrB, the UvrA molecules dissociate. This is UvrABC system protein A from Xylella fastidiosa (strain 9a5c).